Consider the following 288-residue polypeptide: 18S rRNA aminocarboxypropyltransferase (288 aa).

4 residues coordinate S-adenosyl-L-methionine: S43, V91, L114, and W129. The segment covering 209–221 (IWSAGNLNHKPTL) has biased composition (polar residues). The tract at residues 209–267 (IWSAGNLNHKPTLNTSSTHSNSEESRSPLHEPSEASLAHDEHSIPTDDNEETLTNLQAN) is disordered. Positions 229–253 (NSEESRSPLHEPSEASLAHDEHSIP) are enriched in basic and acidic residues.

Belongs to the TDD superfamily. TSR3 family.

Its subcellular location is the cytoplasm. It localises to the nucleus. It catalyses the reaction an N(1)-methylpseudouridine in rRNA + S-adenosyl-L-methionine = N(1)-methyl-N(3)-[(3S)-3-amino-3-carboxypropyl]pseudouridine in rRNA + S-methyl-5'-thioadenosine + H(+). It carries out the reaction N(1)-methylpseudouridine(1191) in yeast 18S rRNA + S-adenosyl-L-methionine = N(1)-methyl-N(3)-[(3S)-3-amino-3-carboxypropyl]pseudouridine(1191) in yeast 18S rRNA + S-methyl-5'-thioadenosine + H(+). Aminocarboxypropyltransferase that catalyzes the aminocarboxypropyl transfer on pseudouridine at position 1191 (Psi1191) in 18S rRNA. It constitutes the last step in biosynthesis of the hypermodified N1-methyl-N3-(3-amino-3-carboxypropyl) pseudouridine (m1acp3-Psi) conserved in eukaryotic 18S rRNA. Required for processing 35S pre-rRNA at site D. This is 18S rRNA aminocarboxypropyltransferase from Schizosaccharomyces pombe (strain 972 / ATCC 24843) (Fission yeast).